A 37-amino-acid polypeptide reads, in one-letter code: Protein YhiY (37 aa).

This is Protein YhiY from Escherichia coli (strain K12).